Consider the following 358-residue polypeptide: Probable protein phosphatase 2C 34 (358 aa).

In terms of domain architecture, PPM-type phosphatase spans 62 to 349 (LASVFSRRGE…DDISAVCLFF (288 aa)). Residues Asp98, Gly99, Asp294, and Asp340 each contribute to the Mn(2+) site.

It belongs to the PP2C family. Requires Mg(2+) as cofactor. The cofactor is Mn(2+).

It catalyses the reaction O-phospho-L-seryl-[protein] + H2O = L-seryl-[protein] + phosphate. The enzyme catalyses O-phospho-L-threonyl-[protein] + H2O = L-threonyl-[protein] + phosphate. The chain is Probable protein phosphatase 2C 34 from Arabidopsis thaliana (Mouse-ear cress).